A 94-amino-acid polypeptide reads, in one-letter code: Integration host factor subunit beta (94 aa).

This sequence belongs to the bacterial histone-like protein family. As to quaternary structure, heterodimer of an alpha and a beta chain.

This protein is one of the two subunits of integration host factor, a specific DNA-binding protein that functions in genetic recombination as well as in transcriptional and translational control. The polypeptide is Integration host factor subunit beta (Chelativorans sp. (strain BNC1)).